The chain runs to 163 residues: Small ribosomal subunit protein eS10A (163 aa).

Residues 92 to 163 (LTQTTRSNAV…GFGRASRYDN (72 aa)) are disordered. Residues 105–116 (GGPGGPGGGFGG) show a composition bias toward gly residues.

Belongs to the eukaryotic ribosomal protein eS10 family.

The protein resides in the cytoplasm. This is Small ribosomal subunit protein eS10A (RpS10a) from Drosophila melanogaster (Fruit fly).